The following is a 303-amino-acid chain: Ribosomal RNA small subunit methyltransferase H (303 aa).

Residues Cys-36 to His-38, Asp-55, Phe-81, Asp-101, and Gln-108 each bind S-adenosyl-L-methionine.

This sequence belongs to the methyltransferase superfamily. RsmH family.

Its subcellular location is the cytoplasm. It catalyses the reaction cytidine(1402) in 16S rRNA + S-adenosyl-L-methionine = N(4)-methylcytidine(1402) in 16S rRNA + S-adenosyl-L-homocysteine + H(+). Specifically methylates the N4 position of cytidine in position 1402 (C1402) of 16S rRNA. The sequence is that of Ribosomal RNA small subunit methyltransferase H from Aster yellows witches'-broom phytoplasma (strain AYWB).